Reading from the N-terminus, the 904-residue chain is MTDVLTTASLISEESRATATPMMEQYIEIKANNPGSLLFYRMGDFYELFFDDAVEASRALGITLTKRGQHMGHDIPMCGVPVHAADDYLQKLILRGYRVAVCEQIEDPAEAKKRGSKSVVKRDVVRLVTPGTLTEEKLLSPTESNYLMALARIRGSAEAQFALAWIDISTGVFRLAETTLTRLLADIWRIDPRELIVADSLFHDEELRPVFDVLGRVAVPQPAILFDSAVAEGRIARYFNVSTLDGFGTFSRVEMAAAAAAVAYVEKTQIAERPPLGAPERESAASTLFIDPATRANLELVKTLSGDRDGSLLHALNRTVTGGGARLLAERLMSPLTDPERINARLDAVAYLIDDVSLCDGLRDALKHVADMPRALSRLALERGGPRDLGAIRQGLVSAEKIAVILDGGLLPDELAKALRDLKALPGALEAMLGSMLADDLPLLKRDGGFLREGANPELDEVRALRDQSRRVIAGLQLQYADETGIKSLKIKHNNVLGYFIEVTAGNADVMMATDEAKARFIHRQTMAGAMRFTTTELADLESRIANAAAEALTMELEAFERMVEAVVQQAEAIKAGALALAVIDVASSLAYLATEQAYCRPIVDASMTFSIKGGRHPVVEQALRRQSAGPFIANNCDLSAVNGGKNGAIWLLTGPNMGGKSTFLRQNALIAILAQIGSFVPAEAAHIGVVDRLFSRVGASDDLARGRSTFMVEMVETAAILNQATDRSLVILDEIGRGTATFDGLSIAWAAVEHLHEVNRCRGLFATHFHELTVLSEKLGRLSNATMRVKEWEGDVIFLHEVGPGAADRSYGIQVARLAGLPASVVERAREVLTKLEDADRKNPASQLIDDLPLFQIAVRREETRKAGPSKVEEALKSFNPDEMTPREALDALYALKKELGKA.

655–662 (GPNMGGKS) contributes to the ATP binding site.

It belongs to the DNA mismatch repair MutS family.

Its function is as follows. This protein is involved in the repair of mismatches in DNA. It is possible that it carries out the mismatch recognition step. This protein has a weak ATPase activity. This Agrobacterium fabrum (strain C58 / ATCC 33970) (Agrobacterium tumefaciens (strain C58)) protein is DNA mismatch repair protein MutS.